Here is a 488-residue protein sequence, read N- to C-terminus: Lysine--tRNA ligase (488 aa).

2 residues coordinate Mg(2+): E397 and E404.

This sequence belongs to the class-II aminoacyl-tRNA synthetase family. In terms of assembly, homodimer. The cofactor is Mg(2+).

Its subcellular location is the cytoplasm. It catalyses the reaction tRNA(Lys) + L-lysine + ATP = L-lysyl-tRNA(Lys) + AMP + diphosphate. The polypeptide is Lysine--tRNA ligase (lysS) (Mycoplasmopsis fermentans (strain ATCC 19989 / NBRC 14854 / NCTC 10117 / PG18) (Mycoplasma fermentans)).